A 268-amino-acid chain; its full sequence is Oxygen-evolving enhancer protein 2-1, chloroplastic (268 aa).

The N-terminal 82 residues, 1–82 (MASTQCFLHQ…IGSKVSPADA (82 aa)), are a transit peptide targeting the chloroplast.

The protein belongs to the PsbP family.

The protein localises to the plastid. It is found in the chloroplast thylakoid membrane. May be involved in the regulation of photosystem II. This Nicotiana tabacum (Common tobacco) protein is Oxygen-evolving enhancer protein 2-1, chloroplastic (PSBP1).